Here is a 753-residue protein sequence, read N- to C-terminus: LON peptidase N-terminal domain and RING finger protein 3 (753 aa).

The disordered stretch occupies residues Gly17 to Glu57. Residues Cys72–Val105 form a TPR 1 repeat. Residues Cys159–Gly197 form an RING-type 1 zinc finger. TPR repeat units follow at residues Ala244–Asp277, Leu279–Gly311, and Lys313–Asn345. The disordered stretch occupies residues Glu351–Pro450. The segment covering Ser363–Gln382 has biased composition (low complexity). The span at Ser386–Lys413 shows a compositional bias: basic and acidic residues. An RING-type 2 zinc finger spans residues Cys461–Lys499. In terms of domain architecture, Lon N-terminal spans Met540–Ser749.

The protein is LON peptidase N-terminal domain and RING finger protein 3 (Lonrf3) of Mus musculus (Mouse).